Reading from the N-terminus, the 288-residue chain is DegV domain-containing protein (288 aa).

The DegV domain occupies isoleucine 3–glycine 282. Residues threonine 62 and serine 95 each contribute to the hexadecanoate site.

In terms of biological role, may bind long-chain fatty acids, such as palmitate, and may play a role in lipid transport or fatty acid metabolism. The sequence is that of DegV domain-containing protein from Staphylococcus aureus.